Reading from the N-terminus, the 185-residue chain is Ribosome-recycling factor (185 aa).

Residues E138–Q157 are disordered.

It belongs to the RRF family.

It is found in the cytoplasm. Responsible for the release of ribosomes from messenger RNA at the termination of protein biosynthesis. May increase the efficiency of translation by recycling ribosomes from one round of translation to another. In Desulfitobacterium hafniense (strain DSM 10664 / DCB-2), this protein is Ribosome-recycling factor.